Consider the following 418-residue polypeptide: Equilibrative nucleotide transporter 3 (418 aa).

The next 11 membrane-spanning stretches (helical) occupy residues 20–40, 56–76, 86–106, 112–132, 142–162, 186–206, 264–284, 291–311, 326–346, 353–373, and 392–412; these read MVVCCILGIGSLVSWNSMLTI, VLTLVYQPFALGTILILAYHE, LIGYILFTISTFLLIVLDLAT, IGPYIGLCAVVASFGLADATV, LMCPELVQSFMGGLAVSGALT, MFLAISTCIELLCVFLYAYVF, YAVNLFLIYVCTLSIFPGFLY, GLGDWYALVLVAMYNCWDLVG, KLITIAVLSRYLLIPAFYFTA, WMIMLISVLGLTNGHLTVCIM, and LVIFLLGGIFAGVALDWLWLI.

It belongs to the SLC29A/ENT transporter (TC 2.A.57) family. Expressed in root tips, vasculature of roots and leaves, and meristems of leaf primordia. Expressed in flowers and siliques.

Its subcellular location is the cell membrane. Its function is as follows. Nucleoside transporter that functions as a pyrimidine nucleoside carrier in all organs. Has high affinity for adenosine and uridine when expressed in a heterologous system (yeast). Mediates proton-dependent adenosine or uridine transport in Xenopus oocytes. This is Equilibrative nucleotide transporter 3 from Arabidopsis thaliana (Mouse-ear cress).